A 332-amino-acid chain; its full sequence is Glycerol-3-phosphate dehydrogenase [NAD(P)+] (332 aa).

NADPH is bound by residues W13, R33, and K107. Residues K107, G136, and S138 each contribute to the sn-glycerol 3-phosphate site. A140 is a binding site for NADPH. K191, D244, S254, R255, and N256 together coordinate sn-glycerol 3-phosphate. K191 serves as the catalytic Proton acceptor. Residue R255 participates in NADPH binding. Position 280 (E280) interacts with NADPH.

It belongs to the NAD-dependent glycerol-3-phosphate dehydrogenase family.

The protein localises to the cytoplasm. The enzyme catalyses sn-glycerol 3-phosphate + NAD(+) = dihydroxyacetone phosphate + NADH + H(+). The catalysed reaction is sn-glycerol 3-phosphate + NADP(+) = dihydroxyacetone phosphate + NADPH + H(+). It functions in the pathway membrane lipid metabolism; glycerophospholipid metabolism. Catalyzes the reduction of the glycolytic intermediate dihydroxyacetone phosphate (DHAP) to sn-glycerol 3-phosphate (G3P), the key precursor for phospholipid synthesis. The protein is Glycerol-3-phosphate dehydrogenase [NAD(P)+] of Alkalilimnicola ehrlichii (strain ATCC BAA-1101 / DSM 17681 / MLHE-1).